Reading from the N-terminus, the 190-residue chain is 3-isopropylmalate dehydratase small subunit (190 aa).

The protein belongs to the LeuD family. LeuD type 1 subfamily. Heterodimer of LeuC and LeuD.

It catalyses the reaction (2R,3S)-3-isopropylmalate = (2S)-2-isopropylmalate. It participates in amino-acid biosynthesis; L-leucine biosynthesis; L-leucine from 3-methyl-2-oxobutanoate: step 2/4. Functionally, catalyzes the isomerization between 2-isopropylmalate and 3-isopropylmalate, via the formation of 2-isopropylmaleate. This is 3-isopropylmalate dehydratase small subunit from Staphylococcus aureus (strain MRSA252).